Reading from the N-terminus, the 431-residue chain is Adenylosuccinate synthetase (431 aa).

Residues 13–19 and 41–43 each bind GTP; these read GDEGKGK and GHT. Asp14 acts as the Proton acceptor in catalysis. Mg(2+) is bound by residues Asp14 and Gly41. IMP contacts are provided by residues 14–17, 39–42, Thr130, Arg144, Gln225, Thr240, and Arg304; these read DEGK and NAGH. His42 acts as the Proton donor in catalysis. 300-306 provides a ligand contact to substrate; the sequence is TTTGRSR. GTP is bound by residues Arg306, 332–334, and 414–416; these read KLD and STG.

It belongs to the adenylosuccinate synthetase family. Homodimer. Mg(2+) serves as cofactor.

It localises to the cytoplasm. The enzyme catalyses IMP + L-aspartate + GTP = N(6)-(1,2-dicarboxyethyl)-AMP + GDP + phosphate + 2 H(+). It participates in purine metabolism; AMP biosynthesis via de novo pathway; AMP from IMP: step 1/2. Plays an important role in the de novo pathway of purine nucleotide biosynthesis. Catalyzes the first committed step in the biosynthesis of AMP from IMP. The sequence is that of Adenylosuccinate synthetase from Marinobacter nauticus (strain ATCC 700491 / DSM 11845 / VT8) (Marinobacter aquaeolei).